We begin with the raw amino-acid sequence, 411 residues long: Adenylosuccinate synthetase (411 aa).

GTP is bound by residues Gly-11–Lys-17 and Gly-39–Thr-41. The active-site Proton acceptor is Asp-12. Mg(2+)-binding residues include Asp-12 and Gly-39. IMP is bound by residues Asp-12–Lys-15, Asn-37–His-40, Thr-121, Arg-135, Gln-215, Thr-230, and Arg-294. His-40 acts as the Proton donor in catalysis. Thr-290 to Arg-296 lines the substrate pocket. Residues Arg-296, Lys-322–Asp-324, and Ser-400–Ser-402 each bind GTP.

This sequence belongs to the adenylosuccinate synthetase family. In terms of assembly, homodimer. Mg(2+) serves as cofactor.

It localises to the cytoplasm. It catalyses the reaction IMP + L-aspartate + GTP = N(6)-(1,2-dicarboxyethyl)-AMP + GDP + phosphate + 2 H(+). Its pathway is purine metabolism; AMP biosynthesis via de novo pathway; AMP from IMP: step 1/2. Plays an important role in the de novo pathway of purine nucleotide biosynthesis. Catalyzes the first committed step in the biosynthesis of AMP from IMP. The protein is Adenylosuccinate synthetase of Helicobacter pylori (strain J99 / ATCC 700824) (Campylobacter pylori J99).